The chain runs to 300 residues: Transcription factor DUO1 (300 aa).

HTH myb-type domains lie at 8–64 (KEEI…RPNL) and 65–116 (KNGC…KRLA). DNA-binding regions (H-T-H motif) lie at residues 36–60 (WSSI…VNKL) and 89–112 (WARI…SSRQ). A compositionally biased stretch (low complexity) spans 123-135 (SDASSSSFNPKSS). Positions 123 to 145 (SDASSSSFNPKSSSSHRLKGKNV) are disordered. The span at 136–145 (SSHRLKGKNV) shows a compositional bias: basic residues.

As to expression, confined to inflorescences, especially in stamens and pollen.

Its subcellular location is the nucleus. Transcription activator that acts as a positive regulator of male germline development by promoting both gametic cell specification and cell cycle progression. Binds to canonical MYB sites 5'-AACCGTC-3', 5'-AAACCGC-3' and 5'-AACCGT-3' in promoters to trigger the expression of male germline-specific or enriched genes (e.g. MGH3, GEX2 and GCS1), including those required for fertilization. Required for sperm cell specification leading to pollen maturation by activating a germline-specific regulon. Involved in pollen mitosis entry at G2-M transition via the regulation of CYCB1-1, DAZ1 and DAZ2 expression. The polypeptide is Transcription factor DUO1 (Arabidopsis thaliana (Mouse-ear cress)).